The chain runs to 308 residues: Ribosomal RNA small subunit methyltransferase H (308 aa).

S-adenosyl-L-methionine contacts are provided by residues Gly-35 to His-37, Asp-54, Phe-80, Asp-101, and Gln-108.

It belongs to the methyltransferase superfamily. RsmH family.

It localises to the cytoplasm. It carries out the reaction cytidine(1402) in 16S rRNA + S-adenosyl-L-methionine = N(4)-methylcytidine(1402) in 16S rRNA + S-adenosyl-L-homocysteine + H(+). Functionally, specifically methylates the N4 position of cytidine in position 1402 (C1402) of 16S rRNA. The chain is Ribosomal RNA small subunit methyltransferase H from Mycoplasma pneumoniae (strain ATCC 29342 / M129 / Subtype 1) (Mycoplasmoides pneumoniae).